A 285-amino-acid chain; its full sequence is Pantothenate synthetase (285 aa).

Residue 30–37 (MGNLHRGH) coordinates ATP. His37 functions as the Proton donor in the catalytic mechanism. Gln61 is a binding site for (R)-pantoate. Gln61 contributes to the beta-alanine binding site. An ATP-binding site is contributed by 149–152 (GRKD). Residue Gln155 coordinates (R)-pantoate. ATP contacts are provided by residues Val178 and 186-189 (LSSR).

This sequence belongs to the pantothenate synthetase family. As to quaternary structure, homodimer.

It is found in the cytoplasm. The enzyme catalyses (R)-pantoate + beta-alanine + ATP = (R)-pantothenate + AMP + diphosphate + H(+). It functions in the pathway cofactor biosynthesis; (R)-pantothenate biosynthesis; (R)-pantothenate from (R)-pantoate and beta-alanine: step 1/1. Its function is as follows. Catalyzes the condensation of pantoate with beta-alanine in an ATP-dependent reaction via a pantoyl-adenylate intermediate. In Halorhodospira halophila (strain DSM 244 / SL1) (Ectothiorhodospira halophila (strain DSM 244 / SL1)), this protein is Pantothenate synthetase.